We begin with the raw amino-acid sequence, 404 residues long: Serine/threonine-protein kinase UCN (404 aa).

In terms of domain architecture, Protein kinase spans 22 to 340; sequence LKVLKLLGKG…AAEIKEHAFF (319 aa). Residues 28–36 and Lys-55 each bind ATP; that span reads LGKGATGTV. Asp-153 functions as the Proton acceptor in the catalytic mechanism. Positions 185-207 are disordered; sequence EFYHLSDPEPDPNPESNLSHNKK. Positions 341–404 constitute an AGC-kinase C-terminal domain; sequence KGVRWELLTE…CSENNPFVDF (64 aa).

It belongs to the protein kinase superfamily. AGC Ser/Thr protein kinase family. In terms of tissue distribution, expressed in the epidermis and cortex of the transition zone of the root apex and developing flowers. Expressed in rosette leaves, stems and siliques.

The protein resides in the cytoplasm. Its subcellular location is the nucleus. The catalysed reaction is L-seryl-[protein] + ATP = O-phospho-L-seryl-[protein] + ADP + H(+). The enzyme catalyses L-threonyl-[protein] + ATP = O-phospho-L-threonyl-[protein] + ADP + H(+). Functionally, regulates planar ovule integument development by suppressing aberrantly oriented growth. Maintains planar growth of integuments by repressing the developmental regulator and transcription factor KAN4 which is involved in the control of early integument growth and polarity. Restricts growth in stamen filaments, petals, and cotyledons. The chain is Serine/threonine-protein kinase UCN from Arabidopsis thaliana (Mouse-ear cress).